The following is a 2359-amino-acid chain: Low-reducing polyketide synthase drtA (2359 aa).

The Ketosynthase family 3 (KS3) domain maps to 17 to 444 (LPPIAVVSFA…GANAHVIVEE (428 aa)). Active-site for beta-ketoacyl synthase activity residues include C190, H327, and H367. The tract at residues 556–868 (VFTGQGSQWP…QYLAALDRGK (313 aa)) is malonyl-CoA:ACP transacylase (MAT) domain. Catalysis depends on S648, which acts as the For malonyltransferase activity. An N-terminal hotdog fold region spans residues 940 to 1077 (HELLGRKILG…GRISVRQVAA (138 aa)). The interval 940-1245 (HELLGRKILG…FKGLRFSELN (306 aa)) is dehydratase (DH) domain. The PKS/mFAS DH domain maps to 940-1250 (HELLGRKILG…FSELNMGDGV (311 aa)). The active-site Proton acceptor; for dehydratase activity is H972. Residues 1089 to 1250 (AYSESAEHWY…FSELNMGDGV (162 aa)) are C-terminal hotdog fold. The Proton donor; for dehydratase activity role is filled by D1153. Residues 1659-1970 (GSFDSLELYE…TGRHVGKVVV (312 aa)) form an enoyl reductase (ER) domain region. Residues 1995–2172 (SYLITGGLHG…LSLDIGAVQD (178 aa)) form a ketoreductase (KR) domain region. Residues 2280–2356 (ALTEAAIELF…ALCSKLITRL (77 aa)) form the Carrier domain. S2316 carries the O-(pantetheine 4'-phosphoryl)serine modification.

It participates in secondary metabolite biosynthesis; terpenoid biosynthesis. Low-reducing polyketide synthase; part of the gene cluster that mediates the biosynthesis of various drimane-type sesquiterpene esters, compounds that exhibit diverse biological activities and are widely present in eukaryotes. The pathway begins with the synthesis of the backbone drimenol by the terpene cyclase drtB using farnesyl pyrophosphate (FPP) as substrate. The cytochrome P450 monooxygenase drtD is then responsible for the hydroxylations at C-6, C-9 and C-12, as well as the oxidation of hydroxyl groups at C-6 and C-11 to a ketone and an aldehyde, respectively. Then, the biosynthesis can go in two directions, either the hydroxylated drimenol is further hydroxylated at C-2 and C-3 by an enzyme(s) not associated with the drt cluster, or the FAD-binding oxidoreductase drtC further oxidizes C-11 or C-12 to form the butyrolactone ring. DrtB, drtD and drtC are solely responsible for the formation of the different drimane structures observed during drimane sesquiterpenes biosynthesis. The polyketide synthase drtA synthesizes different lengths (C6 and C8) of PKS chains, which are then oxidized to varying degrees by the short-chain dehydrogenase drtF. Finally, these PKS chains are transferred onto drimane sesquiterpenes by the acyltransferase drtE, forming the sesquiterpene esters. In addition to the different fatty acyl-CoA chains produced by drtA, drtE is also able to use cinnamoyl-CoA as a substrate. The chain is Low-reducing polyketide synthase drtA from Aspergillus calidoustus.